Here is an 867-residue protein sequence, read N- to C-terminus: Putative ribosome biogenesis ATPase nvl (867 aa).

The disordered stretch occupies residues leucine 70–asparagine 203. Residues glutamate 110–asparagine 122 show a composition bias toward polar residues. Composition is skewed to low complexity over residues threonine 123–proline 132, isoleucine 141–serine 172, and asparagine 180–asparagine 203. Glycine 257–threonine 264 serves as a coordination point for ATP. A disordered region spans residues serine 351–glutamine 370. Position 607–614 (glycine 607–threonine 614) interacts with ATP. Residues aspartate 834–proline 843 are compositionally biased toward basic and acidic residues. The disordered stretch occupies residues aspartate 834 to isoleucine 855. Positions asparagine 844–isoleucine 855 are enriched in low complexity.

Belongs to the AAA ATPase family.

It is found in the nucleus. Its subcellular location is the nucleolus. The protein resides in the nucleoplasm. Involved in ribosome biogenesis. This chain is Putative ribosome biogenesis ATPase nvl (nvl), found in Dictyostelium discoideum (Social amoeba).